A 1532-amino-acid chain; its full sequence is Multidrug resistance-associated protein 1 (1532 aa).

The Extracellular portion of the chain corresponds to 1–33 (MALSSFCSSDGSDPLWDWNVTWHTSNPDFTKCF). Asn-19 carries an N-linked (GlcNAc...) asparagine glycan. The chain crosses the membrane as a helical span at residues 34–54 (QNTVLTWVPCFYLWSCFPLYF). Topologically, residues 55–74 (LYLSRHDRGYIQMTHLNKAK) are cytoplasmic. A helical transmembrane segment spans residues 75–95 (TALGFFLWIICWADLFYSFWE). Topologically, residues 96–100 (RSQGM) are extracellular. Residues 101–121 (LLAPVLLVSPTLLGITMLLAT) form a helical membrane-spanning segment. The Cytoplasmic segment spans residues 122-133 (FLIQFERRKGVQ). Residues 134 to 154 (SSGIMLTFWLVALLCALAILR) traverse the membrane as a helical segment. Residues 155-172 (SKIISALKKDAQVDMFRD) are Extracellular-facing. Residues 173 to 193 (SAFYLYFTLVFIQLVLSCFSD) form a helical membrane-spanning segment. The Cytoplasmic segment spans residues 194–317 (SSPLFSETVR…KDRDPSLFKV (124 aa)). Tyr-277 is modified (phosphotyrosine). Phosphoserine is present on Ser-290. A helical transmembrane segment spans residues 318 to 338 (LYKTFGPYFLMSFLYKALHDL). Residues 326–609 (FLMSFLYKAL…LPMVISSIVQ (284 aa)) form the ABC transmembrane type-1 1 domain. Residues 339–364 (MMFAGPEILELIINFVNDREAPDWQG) lie on the Extracellular side of the membrane. The chain crosses the membrane as a helical span at residues 365-385 (YLYTALLFVSACLQTLALHQY). The Cytoplasmic segment spans residues 386–441 (FHICFVTGMRIKTAVVGAVYRKALVITNSARKSSTVGEIVNLMSVDAQRFMDLATY). A helical transmembrane segment spans residues 442-462 (INMIWSAPLQVTLALYFLWLN). Residues 463-465 (LGP) lie on the Extracellular side of the membrane. A helical membrane pass occupies residues 466–486 (SVLAGVAVMILMVPFNAVMAM). Residues 487-548 (KTKTYQVAHM…VLKKSAYLAA (62 aa)) lie on the Cytoplasmic side of the membrane. Lys-504 is subject to N6-succinyllysine. A helical membrane pass occupies residues 549–569 (VGTFTWVCTPFLVALSTFAVF). Residues 570 to 591 (VTVDEKNILDAKKAFVSLALFN) are Extracellular-facing. Residues 592-612 (ILRFPLNILPMVISSIVQASV) traverse the membrane as a helical segment. Residues 613-967 (SLKRLRIFLS…VKLSVYWNYM (355 aa)) lie on the Cytoplasmic side of the membrane. The ABC transporter 1 domain occupies 645-869 (ITVKNATFTW…DGAFAEFVRT (225 aa)). ATP is bound at residue 679-686 (GQVGCGKS). Ser-879, Ser-883, Ser-916, and Ser-931 each carry phosphoserine. The helical transmembrane segment at 968 to 988 (KAIGLCISFLSIFLFLCNHVS) threads the bilayer. The region spanning 975-1257 (SFLSIFLFLC…LVRMSSEMET (283 aa)) is the ABC transmembrane type-1 2 domain. The Extracellular portion of the chain corresponds to 989 to 1026 (ALASNYWLSLWTDDRPAVNGTQENRNFRLSVYGALGIL). A helical membrane pass occupies residues 1027 to 1047 (QGVAVFGYSMAVSIGGIFASR). Residues 1048-1090 (RLHLDLLQNVLRSPMSFFERTPSGNLVNRFSKELDTVDSMIPQ) lie on the Cytoplasmic side of the membrane. The helical transmembrane segment at 1091–1111 (VIKMFMGSLFSVIGAVIIILL) threads the bilayer. Residue Ala-1112 is a topological domain, extracellular. The chain crosses the membrane as a helical span at residues 1113-1133 (TPIAAVIIPPLGLVYFFVQRF). Topologically, residues 1134 to 1204 (YVASSRQLKR…VANRWLAVRL (71 aa)) are cytoplasmic. A helical membrane pass occupies residues 1205-1225 (ECVGNCIVLFAALFAVISRHS). Residues 1226-1227 (LS) are Extracellular-facing. A helical membrane pass occupies residues 1228-1248 (AGLVGLSVSYSLQITAYLNWL). Topologically, residues 1249 to 1532 (VRMSSEMETN…YSMAKDAGLV (284 aa)) are cytoplasmic. Positions 1294–1528 (VEFRDYCLRY…RGVFYSMAKD (235 aa)) constitute an ABC transporter 2 domain. An ATP-binding site is contributed by 1328 to 1335 (GRTGAGKS).

Belongs to the ABC transporter superfamily. ABCC family. Conjugate transporter (TC 3.A.1.208) subfamily. In terms of processing, glycosylated. In terms of tissue distribution, skeletal muscle, brain, heart, spleen, lung and kidney.

The protein localises to the cell membrane. It is found in the basolateral cell membrane. The enzyme catalyses ATP + H2O + xenobioticSide 1 = ADP + phosphate + xenobioticSide 2.. It carries out the reaction an S-substituted glutathione(in) + ATP + H2O = an S-substituted glutathione(out) + ADP + phosphate + H(+). The catalysed reaction is sphing-4-enine 1-phosphate(in) + ATP + H2O = sphing-4-enine 1-phosphate(out) + ADP + phosphate + H(+). It catalyses the reaction leukotriene C4(in) + ATP + H2O = leukotriene C4(out) + ADP + phosphate + H(+). The enzyme catalyses 17beta-estradiol 17-O-(beta-D-glucuronate)(in) + ATP + H2O = 17beta-estradiol 17-O-(beta-D-glucuronate)(out) + ADP + phosphate + H(+). It carries out the reaction daunorubicin(in) + ATP + H2O = daunorubicin(out) + ADP + phosphate + H(+). The catalysed reaction is vincristine(in) + ATP + H2O = vincristine(out) + ADP + phosphate + H(+). It catalyses the reaction 2',3'-cGAMP(in) + ATP + H2O = 2',3'-cGAMP(out) + ADP + phosphate + H(+). The enzyme catalyses S-[(2E,6E,10E)-geranylgeranyl]-L-glutathione(in) + ATP + H2O = S-[(2E,6E,10E)-geranylgeranyl]-L-glutathione(out) + ADP + phosphate + H(+). It carries out the reaction prostaglandin A2-S-(R)-glutathione(in) + ATP + H2O = prostaglandin A2-S-(R)-glutathione(out) + ADP + phosphate + H(+). The catalysed reaction is prostaglandin A2-S-(S)-glutathione(in) + ATP + H2O = prostaglandin A2-S-(S)-glutathione(out) + ADP + phosphate + H(+). With respect to regulation, MK 571 inhibits sphingosine 1-phosphate and leukotriene C4 export. Functionally, mediates export of organic anions and drugs from the cytoplasm. Mediates ATP-dependent transport of glutathione and glutathione conjugates, leukotriene C4, estradiol-17-beta-o-glucuronide, methotrexate, antiviral drugs and other xenobiotics. Confers resistance to anticancer drugs by decreasing accumulation of drug in cells, and by mediating ATP- and GSH-dependent drug export. Hydrolyzes ATP with low efficiency. Catalyzes the export of sphingosine 1-phosphate from mast cells independently of their degranulation. Participates in inflammatory response by allowing export of leukotriene C4 from leukotriene C4-synthesizing cells. Exports S-geranylgeranyl-glutathione (GGG) in lymphoid cells and stromal compartments of lymphoid organs. ABCC1 (via extracellular transport) with GGT5 (via GGG catabolism) establish GGG gradients within lymphoid tissues to position P2RY8-positive lymphocytes at germinal centers in lymphoid follicles and restrict their chemotactic transmigration from blood vessels to the bone marrow parenchyma. Mediates basolateral export of GSH-conjugated R- and S-prostaglandin A2 diastereomers in polarized epithelial cells. This is Multidrug resistance-associated protein 1 from Rattus norvegicus (Rat).